We begin with the raw amino-acid sequence, 138 residues long: Small ribosomal subunit protein bS18m (138 aa).

Belongs to the bacterial ribosomal protein bS18 family. In terms of assembly, component of the mitochondrial small ribosomal subunit. Mature mitochondrial ribosomes consist of a small (37S) and a large (54S) subunit. The 37S subunit contains at least 33 different proteins and 1 molecule of RNA (15S). The 54S subunit contains at least 45 different proteins and 1 molecule of RNA (21S).

It localises to the mitochondrion. This Saccharomyces cerevisiae (strain RM11-1a) (Baker's yeast) protein is Small ribosomal subunit protein bS18m (RSM18).